Consider the following 221-residue polypeptide: Protein-L-isoaspartate O-methyltransferase (221 aa).

The active site involves Ser-64.

The protein belongs to the methyltransferase superfamily. L-isoaspartyl/D-aspartyl protein methyltransferase family.

It localises to the cytoplasm. The catalysed reaction is [protein]-L-isoaspartate + S-adenosyl-L-methionine = [protein]-L-isoaspartate alpha-methyl ester + S-adenosyl-L-homocysteine. Catalyzes the methyl esterification of L-isoaspartyl residues in peptides and proteins that result from spontaneous decomposition of normal L-aspartyl and L-asparaginyl residues. It plays a role in the repair and/or degradation of damaged proteins. This is Protein-L-isoaspartate O-methyltransferase from Thermococcus sibiricus (strain DSM 12597 / MM 739).